Consider the following 148-residue polypeptide: Large ribosomal subunit protein bL9 (148 aa).

The protein belongs to the bacterial ribosomal protein bL9 family.

Functionally, binds to the 23S rRNA. The polypeptide is Large ribosomal subunit protein bL9 (Salinispora tropica (strain ATCC BAA-916 / DSM 44818 / JCM 13857 / NBRC 105044 / CNB-440)).